A 432-amino-acid polypeptide reads, in one-letter code: D-amino acid dehydrogenase (432 aa).

3–17 contributes to the FAD binding site; it reads VVILGSGVVGVTSAW.

The protein belongs to the DadA oxidoreductase family. The cofactor is FAD.

The enzyme catalyses a D-alpha-amino acid + A + H2O = a 2-oxocarboxylate + AH2 + NH4(+). It participates in amino-acid degradation; D-alanine degradation; NH(3) and pyruvate from D-alanine: step 1/1. In terms of biological role, oxidative deamination of D-amino acids. The protein is D-amino acid dehydrogenase of Escherichia fergusonii (strain ATCC 35469 / DSM 13698 / CCUG 18766 / IAM 14443 / JCM 21226 / LMG 7866 / NBRC 102419 / NCTC 12128 / CDC 0568-73).